The sequence spans 481 residues: Probable cytosol aminopeptidase (481 aa).

Mn(2+)-binding residues include Lys247 and Asp252. The active site involves Lys259. Residues Asp270, Asp329, and Glu331 each contribute to the Mn(2+) site. Arg333 is an active-site residue.

This sequence belongs to the peptidase M17 family. Requires Mn(2+) as cofactor.

It is found in the cytoplasm. The enzyme catalyses Release of an N-terminal amino acid, Xaa-|-Yaa-, in which Xaa is preferably Leu, but may be other amino acids including Pro although not Arg or Lys, and Yaa may be Pro. Amino acid amides and methyl esters are also readily hydrolyzed, but rates on arylamides are exceedingly low.. The catalysed reaction is Release of an N-terminal amino acid, preferentially leucine, but not glutamic or aspartic acids.. Functionally, presumably involved in the processing and regular turnover of intracellular proteins. Catalyzes the removal of unsubstituted N-terminal amino acids from various peptides. This Clostridium tetani (strain Massachusetts / E88) protein is Probable cytosol aminopeptidase.